We begin with the raw amino-acid sequence, 1013 residues long: Alpha-2-macroglobulin homolog (1013 aa).

A disordered region spans residues alanine 804–asparagine 844.

It belongs to the protease inhibitor I39 (alpha-2-macroglobulin) family. Bacterial alpha-2-macroglobulin subfamily.

The chain is Alpha-2-macroglobulin homolog from Deinococcus radiodurans (strain ATCC 13939 / DSM 20539 / JCM 16871 / CCUG 27074 / LMG 4051 / NBRC 15346 / NCIMB 9279 / VKM B-1422 / R1).